A 218-amino-acid polypeptide reads, in one-letter code: Orotate phosphoribosyltransferase (218 aa).

Position 26 (Lys-26) interacts with 5-phospho-alpha-D-ribose 1-diphosphate. Residue Phe-34–Phe-35 participates in orotate binding. 5-phospho-alpha-D-ribose 1-diphosphate is bound by residues Tyr-72–Lys-73, Arg-99, Lys-100, Lys-103, His-105, and Asp-124–Ala-132. Thr-128 and Arg-156 together coordinate orotate.

The protein belongs to the purine/pyrimidine phosphoribosyltransferase family. PyrE subfamily. Homodimer. Mg(2+) serves as cofactor.

It carries out the reaction orotidine 5'-phosphate + diphosphate = orotate + 5-phospho-alpha-D-ribose 1-diphosphate. The protein operates within pyrimidine metabolism; UMP biosynthesis via de novo pathway; UMP from orotate: step 1/2. Catalyzes the transfer of a ribosyl phosphate group from 5-phosphoribose 1-diphosphate to orotate, leading to the formation of orotidine monophosphate (OMP). This Hamiltonella defensa subsp. Acyrthosiphon pisum (strain 5AT) protein is Orotate phosphoribosyltransferase.